A 183-amino-acid chain; its full sequence is Archaemetzincin (183 aa).

H131 contributes to the Zn(2+) binding site. The active-site Proton acceptor is E132. Zn(2+) contacts are provided by H135, H141, C142, C147, and C166.

It belongs to the peptidase M54 family. In terms of assembly, monomer. Zn(2+) is required as a cofactor.

Probable zinc metalloprotease whose natural substrate is unknown. This chain is Archaemetzincin, found in Saccharolobus solfataricus (strain ATCC 35092 / DSM 1617 / JCM 11322 / P2) (Sulfolobus solfataricus).